We begin with the raw amino-acid sequence, 271 residues long: Tryptophan synthase alpha chain (271 aa).

Active-site proton acceptor residues include Glu49 and Asp60.

This sequence belongs to the TrpA family. In terms of assembly, tetramer of two alpha and two beta chains.

The enzyme catalyses (1S,2R)-1-C-(indol-3-yl)glycerol 3-phosphate + L-serine = D-glyceraldehyde 3-phosphate + L-tryptophan + H2O. The protein operates within amino-acid biosynthesis; L-tryptophan biosynthesis; L-tryptophan from chorismate: step 5/5. Functionally, the alpha subunit is responsible for the aldol cleavage of indoleglycerol phosphate to indole and glyceraldehyde 3-phosphate. This chain is Tryptophan synthase alpha chain, found in Burkholderia thailandensis (strain ATCC 700388 / DSM 13276 / CCUG 48851 / CIP 106301 / E264).